The sequence spans 277 residues: Undecaprenyl-diphosphatase 1 (277 aa).

8 helical membrane-spanning segments follow: residues 1–21, 39–58, 85–105, 113–133, 147–167, 191–211, 226–246, and 251–271; these read MSLL…FLPI, AGFS…VILY, FWFA…GILF, FKAP…LIII, MTIW…IPGL, SFLL…DDLI, ASFV…LNLV, and LVYF…FQDA.

The protein belongs to the UppP family.

The protein localises to the cell membrane. The catalysed reaction is di-trans,octa-cis-undecaprenyl diphosphate + H2O = di-trans,octa-cis-undecaprenyl phosphate + phosphate + H(+). In terms of biological role, catalyzes the dephosphorylation of undecaprenyl diphosphate (UPP). Confers resistance to bacitracin. The chain is Undecaprenyl-diphosphatase 1 from Shouchella clausii (strain KSM-K16) (Alkalihalobacillus clausii).